Here is a 463-residue protein sequence, read N- to C-terminus: Flotillin-like protein 2 (463 aa).

Cys-35 is lipidated: S-palmitoyl cysteine. The stretch at 305-354 (EYETKVQEANWELYNKQKQAEAVLYEKQKQAEAQKAEADATFYSKQKEAE) forms a coiled coil.

This sequence belongs to the band 7/mec-2 family. Flotillin subfamily. Post-translationally, may be palmitoylated.

The protein localises to the cell membrane. Its subcellular location is the membrane. It localises to the caveola. May act as a scaffolding protein within caveolar membranes, functionally participating in formation of caveolae or caveolae-like vesicles. The polypeptide is Flotillin-like protein 2 (FLOT2) (Arabidopsis thaliana (Mouse-ear cress)).